A 151-amino-acid polypeptide reads, in one-letter code: Large ribosomal subunit protein bL9 (151 aa).

It belongs to the bacterial ribosomal protein bL9 family.

Functionally, binds to the 23S rRNA. This Chlorobium limicola (strain DSM 245 / NBRC 103803 / 6330) protein is Large ribosomal subunit protein bL9.